The primary structure comprises 4830 residues: MAATTLSRLPALHPYSAVAEPRTLDGTRCFKFMRKSCLEFVKSLVNDEKGEKLISSLAVFVGHLVGCDADEALFKVRFGDGQTRITSAGAVHAQVVDVEASSLPGIAFRFFPPQPTLPKTLDDDLVVTVNSNSDKDVEFVLEFAQTVPSEAGQGIFAYFCKQVLESTLTEDETPLSILNPSPVSKLPEHAQLHDSFLDQAEKFPDRMAVQFLERLDQEDMGQFSKLTYDELKRLATSLAVKLQATHAKTSKPQNRQVVVPMLLCPSLELYVSYLAILMAGFAFCPLPVDAPDARLISLLAQLDTTILLGANSSQPPQWMPASVEWINVTDTLAETDQFAKHLTPAKRMQECAYVLFTSGTTGTPKGVQISHYSASISIFSHAACLDPSLLQLSSNTPGSTFKWFQFASTVFDPSVMEIFVTLSSGGTLCSANRALTLSDLEKVVRLSGADIMMATPSVATLLNPERIPKLKFLWTMGECLNSTVIRRFAAENGRTTLANAYGPTEASVNCTLLQPFPADFRGSIIGAPLPSCSLAVLHDGGDSPSGEKRFQAAPRGVTGELVIGGSHVGIGYLDMPEATADAFTTFAPLGRVYRTRDRARVVWDRDGNPLIEILGRMNAEQVKLSGRRVELGEIDSILQSSHTIQNAASVIWRPPTSQLQSGGGERLVCCIVLAPSAQPQDAEADCKIIADAQLPPHMRPWRYIVLPGLPVTVSGKSDRKQLSKIVAELLSSSAEQGSTKERSSEQNQVNANEDPVTQALIEAICAVCQLDAKSVSMDGDLFELGMDSLSAMRLLQLLRQSKVTATAARQLQVAQILGAKACRDLIPLLSDTTVSRDAEENNVSYPNNTDWSTELRSFEDRCRRSALLGLDERTRMRVQKIFPTTATQSGMLTSFLTRPASIGSKRSYINHTVYHFSSVSEACKFFDAFRTVLQKHDIYRTVFVPVDDKLAPFAQCVLSPASDDDNVSAHTSSTAIDACLKQHLEQIDNAISLEQPPWHLGLLAPPQEDEVEQSVVVLSLMHAIFDGGSLDLLQQEVVSLLRDDALQTSLEVRCTELEATVQHHFTSDLESSRRFWHQRLEGVSRTRFPCANGYKATEQSALGHASEVTELYSRSSMDEIVKQARCQRTSALVLLQTAWNLVLAAYTEDESLNYITSGSVHSGRLDEQTQSCMAPTFNVIPFITRLDQGTGNSATLTSAQLLAEATQASTAGLSHLEIPLGALARSGGMPFDTLFAVQRFDAQTCSNATLPWASISYPVMANDFAVMVEVWPGSKATEKMRLRLTYSLAVLDAPSAQLLLQQYEDILHSLMREPETTTVQQLINGEGLRQSALSVCRGPLASENDDSQTEAQLLHSYFENKAATEPEAIALEFYFNQDSDTDGSMEVQRWTYFELNAQANRLARYLLSVTGKPTLRDLPIPICMERCPELYVGVLATLKAGGAWCPIDVQSPRARQLELIARTKSRVVLVTPNTSADLGEVQADGQPLTIKVNACDTSQFHHLSADNLRPTATPATLAYLIWTSGTTGAPKGVMIEHASAVASMQALQQHVKPLQQDMPPRCLQFSAYTFDVFVQDLFWTWGLGGAIIAATREIMLGSTAELIAASQTSHAHLTPAFAAGLRRDSCPSITSVTFIGEKLTESVAADWTSSCASIDKPNDSIAVYNTYGPAEVTVVATLRQLFGGEKLQSANVGVPMQGVTAIVCKNREQPIRPCAKGSIGELVLAGAQVGRGYLNDKAKTEAAFTYSPEWKQRLYYTGDYVRMLHDGSIEFIGRRDDLVKLGGIRVELSEISAALLSVQERRKQAAVVERVETMMLSRLDRPTKQVISFLACPYLAASTDRGVHGAISEPLLLTSGDAIQLAHQTLNNVRDVLPPYMVPSMVLVLSRIPQTASAKIDRAKLQAAYDSADLAQWVSLLSTTADDPDNPEGEDGDLQCQVIAAISEITGTSTQDINSSSSLVSIGLDSIRAIRLAAKLKQNGTPLPISTLLACSTVRMLIRGLATKTGDGHEVAEEDTRNRLLAVKLSEFDKNVREMLPTGSKQDFEVCIPCSTLQEGMLAETLADPAAYWSDHVLQLDSHIDLARLAEAWRRAAHNIEMLRTVFAVVSQTAGLEEVQFDKNTDVFALQMVHKSVDITLIDVCDPIRVKSDDRLHQAVSKWTRSVAQDRADNVFATPLWKVKTFVVQDDSSSGNDQVPLTYAALCIHHALYDGPSIDIILNRVRDEYSALSPDMLDDHHNIRLLPTTSLSTQSEFAYACVADEQRESILHWEQKLQPRGPAAMLPDLTSVKDLPSDAKSARFIAASRKLQCTSARPQGVGLSALIKSAFAIVLAQYVEAEDQRHVVLGEILSLRNLHATLSTEQGAVGPLLTTQPFSLLLDAALEQKSAASYLQSNVIVHPSMQHRFASLASLAKIMGTRSDQEMFTAMYVYHPRRQPVSVSTKPIWTLLEDRSSEIRVEHSTVLNVFEHDDVEDSLILELSMKEDRISKDMLETLLDQVVSLLTLLLDGAGETLQALLGKVGQDQRELASVSHVPRGSRHAGDGSEVDQGHDPLFWLQHYAKNHPSWLAVVIAAGTPETACINDAELSSWTYAQLNAKADQVARLIRSLDLPSEGPIALCMQRSLISIAVTVAIFKCGRTYLPIDDQLPTERKRLLISDSRCALVVTEGTCLGELEADCISSVLNVSKNDFEQSLAALSHRDDHTELTSIKPRADDGAYLLYTSGSTGKPKGVLVGRANLCSFIDSYAEVVSAECPSTLQLGGKGRYLGLAGRAFDVHLSQMFMSWRFGLALATGERPLLLGDLKATVQTMSITHMSCVPSLLDQCDLVPQEVPSLVFLGVGGEKLTDRVRDTLASSLTVLNAYGPTETTIMCTVNRVHPHSHVRDIGQVLPGNTAVVIDFDDKSRFAPVIRGRAGELCIRGDLVALGYHALDPSQMATSGFVTTPDGTRMYRTGDAARMMADGSLHYLGRRDEQEKIRGQRLELGEVSRCAIAGADESIQATTLICQHESLAKPLLITLIATKTSSTGDQRRDTLPQFLAPSTETGRLAQHVLQYCKQHLPSYMVPDLVVGVSHLTQLAASGKTDVRRLKAWLAAADPTQLFSFEGRGHANAQSGSESNVNRPLSSLEREIASAIRRMLPKCPAEIRPDTSIFDLGIDSLSVIRLAGQLRKEGLAISIGRLRMHPRVQDIAAELSDSKALEVDLSVGVKALESFQARHQDQVQASRVEKVTKVLPCLPSQEGMVAISLSSKDEPVYVARIAVRFNDIQPEATAFAAVSLRRAWRQLSERHSILRTCFDHVDDVTIAQIVLDAVDIQRHIVTTKTQNSTAAIARAILQDITVIPPWRIELDDEAGSEPTFVLHMHHALYDGHSLPLLLNDLARVIQSIDDDGPESHDQQPGVQEMLESILSVSEQRAERFWRNTFADFPVNDPSVWTSIASVQGRAPLRCKATVQLAPLEAAAKTLQVTLSSLVASALGIALCRSLETTAFTVGFVLWGRSLDHVSAESIVAPCLTTVPMPFALCADRGSRHVGELIRACHDWNSSCLAFQHTSMRQIRRWIGSECRGSLVDLLYSFVQAGASNSSELARTWHLDSVEAETDAPAAVEVTADRDRDELRISAMARHLLPHDGLEGMTENLQILLNKIANGTGTNMDLKAAGIPTSSVASKLARELPSHSAVSRPLTAAEEQIRDLAVTMCGVPNTEMLQLDTPFLRIGLDSIVALRFSARLRREHGLQLSAHDVLAAGTIAGLSKLLDQRQAEGRSDATVSSSLDSTAARYKATPLQAGMLNGTLASASHDLYVHHHAVLFKQPLDHDRLQRALQHVVASHDILRTSFHLEGEPSETKNAVNSLSWYAQVTPFESLRSATEIRVVRSDKTASAALKEYGTDFIFDGPEKFNVSPWCAAILHCTSSQDVLVISMHHSLYDGVSLPSMFADLRASYHDLTHELVQRPPFSKAADLIASSAHESEQYWLKTLIEFKQPSLLVKKSSRSSTTPSLYRLDERRLSVSLATLKRLSAELGATPQAIAMLSWSKVLAVAAGQRDVCFGQVVSGRYLNLPGIEDVSGPLINTVPIRINLIDDLASNAVTARDLQERIVAAQPFQHASLGRIQNAWRREHGAHSTFFDTLFVFHNIEGKSSSASSSKSELWTALDPSEGPIQTESSTSTVVTTAASEYPVNISVIQDDDGVQIKAGASDAVGGIDWLPKTLQLFEQVFLDLLERPHRSVGAFPERLAALPLTVGRDGTDKDTSASVGVDAGRRSLSTAEQDIVLRHMAKRLNVDAAIINSCPNLFLLGIDSLLAICISADARSEQVPLTPFDVLSAGTFARLTVATETRSEAPRIGVDDSTDTEREMLVGKEAEQEAIELLKVPSCEVETVLPLLTGQQQHIAQWLQRGRRFLEPTFVYACPSKLDVSKLKSAWNELRRRNAALRTAFVRLKDRRTLVQVVLAENSLVWRDHERGRLGVVDGSNNLDAAAFEAVQRLNASPTDLFRPSARLTLVQGKQSDLVLVTIHHTSYDAWSMRLMADELMQLYHNIDQGKLESMRAPVSFADFIDQTHREALRNRDATASFWETRLRGASATLVCRGATQSLEQTMHVRKPALQDVDTLEAACRARGFGLQVVVILAYARLLSSEVSDTKITSPTFGFYTAGRASAIDGVGNMIGPTTAMQPMTVATAGGDQEDLFERLRAIQTDLVSRAEHQQDYVDLPVAFDAHLNLLWHKPITTSMRPPTDDSNASAPSLLKPYRLPYDSGYFTRHPLMPGNTSVDGDIHEAGAQLYMDVGLDASTKSLSLGARCDRSAMDAQQLEAFCDRFVGELEKIRAAL.

An adenylation 1 region spans residues Leu197–Lys623. Positions Ala751–Thr833 constitute a Carrier 1 domain. At Ser788 the chain carries O-(pantetheine 4'-phosphoryl)serine. The condensation 1 stretch occupies residues Gln879–Thr1317. The segment at Phe1358–Leu1781 is adenylation 2. The 77-residue stretch at Gly1929–Thr2005 folds into the Carrier 2 domain. Ser1966 bears the O-(pantetheine 4'-phosphoryl)serine mark. Positions Ile2048–Thr2503 are condensation 2. Positions Ala2573–Ile2977 are adenylation 3. The region spanning Arg3122–Lys3198 is the Carrier 3 domain. Ser3159 carries the post-translational modification O-(pantetheine 4'-phosphoryl)serine. The segment at Lys3232–Ala3621 is condensation 3. A Carrier 4 domain is found at Thr3685–Gln3760. Ser3720 carries the post-translational modification O-(pantetheine 4'-phosphoryl)serine. The segment at Arg3779 to Asp4199 is condensation 4. Residues Ser4264–Ser4340 enclose the Carrier 5 domain. Ser4301 bears the O-(pantetheine 4'-phosphoryl)serine mark. Residues Val4381–Gln4708 are condensation 5.

The protein belongs to the NRP synthetase family.

Its pathway is siderophore biosynthesis. In terms of biological role, nonribosomal peptide synthetase; part of the gene cluster that mediates the biosynthesis of siderophore ferrichrome A which is contributing to organismal virulence. The first step of ferrichrome A biosynthesis is performed by the HMG-CoA synthase hcs1 which catalyzes the generation of HMG-CoA and CoA using acetoacetyl-CoA and acetyl-CoA as substrates. The enoyl-CoA isomerase/hydratase fer4 then catalyzes the conversion of hcs1-produced HMG-CoA to methylglutaconyl-CoA. The acyltransferase fer5 then fuses the fer4-generated methylglutaconyl-CoA with sid1-generated hydroxyornithine to yield methylglutaconyl hydroxyornithine. Methylglutaconyl hydroxyornithine is then available for use by the NRPS fer3 to generate ferrichrome A. The polypeptide is Siderophore peptide synthetase fer3 (Mycosarcoma maydis (Corn smut fungus)).